A 350-amino-acid chain; its full sequence is Heat-inducible transcription repressor HrcA (350 aa).

The protein belongs to the HrcA family.

Functionally, negative regulator of class I heat shock genes (grpE-dnaK-dnaJ and groELS operons). Prevents heat-shock induction of these operons. This is Heat-inducible transcription repressor HrcA from Xanthomonas oryzae pv. oryzae (strain KACC10331 / KXO85).